Reading from the N-terminus, the 545-residue chain is CTP synthase (545 aa).

The interval 1–267 (MTKFIFVTGG…AEQTLKLLQM (267 aa)) is amidoligase domain. Residue serine 13 participates in CTP binding. Serine 13 lines the UTP pocket. ATP-binding positions include 14-19 (SIGKGI) and aspartate 71. The Mg(2+) site is built by aspartate 71 and glutamate 141. Residues 148–150 (DIE), 188–193 (KTKPTQ), and lysine 224 each bind CTP. UTP is bound by residues 188 to 193 (KTKPTQ) and lysine 224. Residues 292-534 (EIAIVGKYVS…VQAAIAQSHP (243 aa)) form the Glutamine amidotransferase type-1 domain. Position 354 (glycine 354) interacts with L-glutamine. Residue cysteine 381 is the Nucleophile; for glutamine hydrolysis of the active site. Residues 382–385 (LGMQ), glutamate 405, and arginine 462 each bind L-glutamine. Catalysis depends on residues histidine 507 and glutamate 509.

The protein belongs to the CTP synthase family. Homotetramer.

It carries out the reaction UTP + L-glutamine + ATP + H2O = CTP + L-glutamate + ADP + phosphate + 2 H(+). It catalyses the reaction L-glutamine + H2O = L-glutamate + NH4(+). The catalysed reaction is UTP + NH4(+) + ATP = CTP + ADP + phosphate + 2 H(+). Its pathway is pyrimidine metabolism; CTP biosynthesis via de novo pathway; CTP from UDP: step 2/2. With respect to regulation, allosterically activated by GTP, when glutamine is the substrate; GTP has no effect on the reaction when ammonia is the substrate. The allosteric effector GTP functions by stabilizing the protein conformation that binds the tetrahedral intermediate(s) formed during glutamine hydrolysis. Inhibited by the product CTP, via allosteric rather than competitive inhibition. Functionally, catalyzes the ATP-dependent amination of UTP to CTP with either L-glutamine or ammonia as the source of nitrogen. Regulates intracellular CTP levels through interactions with the four ribonucleotide triphosphates. The polypeptide is CTP synthase (Trichormus variabilis (strain ATCC 29413 / PCC 7937) (Anabaena variabilis)).